Here is a 215-residue protein sequence, read N- to C-terminus: Phosphatidylserine decarboxylase proenzyme (215 aa).

Residue Ser-186 is the Schiff-base intermediate with substrate; via pyruvic acid of the active site. Ser-186 is modified (pyruvic acid (Ser); by autocatalysis).

Belongs to the phosphatidylserine decarboxylase family. PSD-A subfamily. In terms of assembly, heterodimer of a large membrane-associated beta subunit and a small pyruvoyl-containing alpha subunit. Pyruvate is required as a cofactor. In terms of processing, is synthesized initially as an inactive proenzyme. Formation of the active enzyme involves a self-maturation process in which the active site pyruvoyl group is generated from an internal serine residue via an autocatalytic post-translational modification. Two non-identical subunits are generated from the proenzyme in this reaction, and the pyruvate is formed at the N-terminus of the alpha chain, which is derived from the carboxyl end of the proenzyme. The post-translation cleavage follows an unusual pathway, termed non-hydrolytic serinolysis, in which the side chain hydroxyl group of the serine supplies its oxygen atom to form the C-terminus of the beta chain, while the remainder of the serine residue undergoes an oxidative deamination to produce ammonia and the pyruvoyl prosthetic group on the alpha chain.

The protein resides in the cell membrane. The catalysed reaction is a 1,2-diacyl-sn-glycero-3-phospho-L-serine + H(+) = a 1,2-diacyl-sn-glycero-3-phosphoethanolamine + CO2. Its pathway is phospholipid metabolism; phosphatidylethanolamine biosynthesis; phosphatidylethanolamine from CDP-diacylglycerol: step 2/2. Functionally, catalyzes the formation of phosphatidylethanolamine (PtdEtn) from phosphatidylserine (PtdSer). This chain is Phosphatidylserine decarboxylase proenzyme, found in Pelagibacter ubique (strain HTCC1062).